The sequence spans 309 residues: GTP cyclohydrolase MptA (309 aa).

Belongs to the GTP cyclohydrolase IV family. As to quaternary structure, homodimer. It depends on Fe(2+) as a cofactor.

The enzyme catalyses GTP + H2O = 7,8-dihydroneopterin 2',3'-cyclic phosphate + formate + diphosphate + H(+). The protein operates within cofactor biosynthesis; 5,6,7,8-tetrahydromethanopterin biosynthesis. Functionally, converts GTP to 7,8-dihydro-D-neopterin 2',3'-cyclic phosphate, the first intermediate in the biosynthesis of coenzyme methanopterin. The sequence is that of GTP cyclohydrolase MptA from Haloquadratum walsbyi (strain DSM 16790 / HBSQ001).